A 261-amino-acid polypeptide reads, in one-letter code: Cytochrome c oxidase subunit 3 (261 aa).

Over 1 to 15 the chain is Mitochondrial matrix; it reads MAHQAHAYHMVDPSP. A helical membrane pass occupies residues 16-34; sequence WPLTGAIAALLLTSGTAVW. The Mitochondrial intermembrane segment spans residues 35-40; it reads FHFHSL. Residues 41-66 form a helical membrane-spanning segment; it reads TLLTMGNILLLLTMYQWWRDIIREGT. The Mitochondrial matrix segment spans residues 67–72; the sequence is FQGHHT. The chain crosses the membrane as a helical span at residues 73–105; it reads PPVQKGLRYGMILFITSEVFFFLGFFWAFYHSS. Topologically, residues 106–128 are mitochondrial intermembrane; the sequence is LSPTPELGGCWPPTGIITLDPFE. Residues 129–152 traverse the membrane as a helical segment; it reads VPLLNTAVLLASGVTVTWAHHSIM. The Mitochondrial matrix segment spans residues 153–155; the sequence is EGE. Residues 156–183 traverse the membrane as a helical segment; it reads RKQTIQALTLTILLGFYFTFLQGMEYYE. Over 184–190 the chain is Mitochondrial intermembrane; sequence APFTIAD. Residues 191-223 form a helical membrane-spanning segment; that stretch reads GVYGSTFFVATGFHGLHVIIGSTFLAICLLRQI. The Mitochondrial matrix portion of the chain corresponds to 224 to 232; sequence QYHFTSEHH. Residues 233–256 form a helical membrane-spanning segment; sequence FGFEAAAWYWHFVDVVWLFLYVSI. At 257-261 the chain is on the mitochondrial intermembrane side; that stretch reads YWWGS.

This sequence belongs to the cytochrome c oxidase subunit 3 family. Component of the cytochrome c oxidase (complex IV, CIV), a multisubunit enzyme composed of 14 subunits. The complex is composed of a catalytic core of 3 subunits MT-CO1, MT-CO2 and MT-CO3, encoded in the mitochondrial DNA, and 11 supernumerary subunits COX4I, COX5A, COX5B, COX6A, COX6B, COX6C, COX7A, COX7B, COX7C, COX8 and NDUFA4, which are encoded in the nuclear genome. The complex exists as a monomer or a dimer and forms supercomplexes (SCs) in the inner mitochondrial membrane with NADH-ubiquinone oxidoreductase (complex I, CI) and ubiquinol-cytochrome c oxidoreductase (cytochrome b-c1 complex, complex III, CIII), resulting in different assemblies (supercomplex SCI(1)III(2)IV(1) and megacomplex MCI(2)III(2)IV(2)).

Its subcellular location is the mitochondrion inner membrane. It catalyses the reaction 4 Fe(II)-[cytochrome c] + O2 + 8 H(+)(in) = 4 Fe(III)-[cytochrome c] + 2 H2O + 4 H(+)(out). Component of the cytochrome c oxidase, the last enzyme in the mitochondrial electron transport chain which drives oxidative phosphorylation. The respiratory chain contains 3 multisubunit complexes succinate dehydrogenase (complex II, CII), ubiquinol-cytochrome c oxidoreductase (cytochrome b-c1 complex, complex III, CIII) and cytochrome c oxidase (complex IV, CIV), that cooperate to transfer electrons derived from NADH and succinate to molecular oxygen, creating an electrochemical gradient over the inner membrane that drives transmembrane transport and the ATP synthase. Cytochrome c oxidase is the component of the respiratory chain that catalyzes the reduction of oxygen to water. Electrons originating from reduced cytochrome c in the intermembrane space (IMS) are transferred via the dinuclear copper A center (CU(A)) of subunit 2 and heme A of subunit 1 to the active site in subunit 1, a binuclear center (BNC) formed by heme A3 and copper B (CU(B)). The BNC reduces molecular oxygen to 2 water molecules using 4 electrons from cytochrome c in the IMS and 4 protons from the mitochondrial matrix. This Salmo salar (Atlantic salmon) protein is Cytochrome c oxidase subunit 3 (mt-co3).